A 565-amino-acid chain; its full sequence is Hemagglutinin-neuraminidase (565 aa).

Residues 1–20 (MVAEDAPVRGTCRVLFRTTT) lie on the Intravirion side of the membrane. The helical transmembrane segment at 21-41 (LIFLCTLLALSISILYESLII) threads the bilayer. The Virion surface portion of the chain corresponds to 42–565 (QKQIMSQAGS…VPFIRQVTLS (524 aa)). N-linked (GlcNAc...) asparagine; by host glycans are attached at residues N110 and N139. 3 disulfides stabilise this stretch: C161/C185, C175/C236, and C227/C240. An involved in neuraminidase activity region spans residues 223–228 (NRKSCS). N-linked (GlcNAc...) asparagine; by host glycosylation occurs at N267. 3 disulfides stabilise this stretch: C333–C454, C365–C375, and C448–C458. Residue N504 is glycosylated (N-linked (GlcNAc...) asparagine; by host). C528 and C539 form a disulfide bridge.

The protein belongs to the paramyxoviruses hemagglutinin-neuraminidase family. In terms of assembly, homotetramer; composed of disulfide-linked homodimers. Interacts with F protein trimer.

The protein localises to the virion membrane. It is found in the host cell membrane. The catalysed reaction is Hydrolysis of alpha-(2-&gt;3)-, alpha-(2-&gt;6)-, alpha-(2-&gt;8)- glycosidic linkages of terminal sialic acid residues in oligosaccharides, glycoproteins, glycolipids, colominic acid and synthetic substrates.. Attaches the virus to sialic acid-containing cell receptors and thereby initiating infection. Binding of HN protein to the receptor induces a conformational change that allows the F protein to trigger virion/cell membranes fusion. Its function is as follows. Neuraminidase activity ensures the efficient spread of the virus by dissociating the mature virions from the neuraminic acid containing glycoproteins. The chain is Hemagglutinin-neuraminidase (HN) from Parainfluenza virus 5 (isolate Canine/CPI-) (PIV5).